The following is a 282-amino-acid chain: Chorismate dehydratase (282 aa).

The protein belongs to the MqnA/MqnD family. MqnA subfamily.

It catalyses the reaction chorismate = 3-[(1-carboxyvinyl)-oxy]benzoate + H2O. The protein operates within quinol/quinone metabolism; menaquinone biosynthesis. Catalyzes the dehydration of chorismate into 3-[(1-carboxyvinyl)oxy]benzoate, a step in the biosynthesis of menaquinone (MK, vitamin K2). In Streptomyces coelicolor (strain ATCC BAA-471 / A3(2) / M145), this protein is Chorismate dehydratase.